Consider the following 388-residue polypeptide: Gastricsin (388 aa).

A signal peptide spans 1 to 16 (MKWMVVAFICLQLLEA). The propeptide at 17 to 59 (TVVKVPLKKFKSIRETMKEKGLLWEFLKTHKHDPARKYRVSDL) is activation peptide. The Peptidase A1 domain occupies 73-385 (YFGEISIGTP…DLGNNRVGFA (313 aa)). Residue aspartate 91 is part of the active site. 2 cysteine pairs are disulfide-bonded: cysteine 104-cysteine 109 and cysteine 267-cysteine 271. Residue aspartate 276 is part of the active site. A disulfide bond links cysteine 310 and cysteine 343.

This sequence belongs to the peptidase A1 family.

It is found in the secreted. It carries out the reaction More restricted specificity than pepsin A, but shows preferential cleavage at Tyr-|-Xaa bonds. High activity on hemoglobin.. With respect to regulation, inhibited by pepstatin. Hydrolyzes a variety of proteins. This Callithrix jacchus (White-tufted-ear marmoset) protein is Gastricsin (PGC).